A 372-amino-acid polypeptide reads, in one-letter code: Ciliary neurotrophic factor receptor subunit alpha (372 aa).

The N-terminal stretch at 1–22 (MAASVPWACCAVLAAAAAAVYT) is a signal peptide. The Ig-like C2-type domain maps to 27-104 (PQEAPHVQYE…WHLRHQVLLH (78 aa)). The cysteines at positions 46 and 89 are disulfide-linked. Asn-60, Asn-70, Asn-142, Asn-190, and Asn-261 each carry an N-linked (GlcNAc...) asparagine glycan. Fibronectin type-III domains follow at residues 108-205 (PPRE…VKPD) and 206-306 (PPEN…TEEP). Residues 290–294 (WSDWS) carry the WSXWS motif motif. The disordered stretch occupies residues 301–339 (PWTEEPRHLTTEAQAPETTTSTTSSLAPPPTTKICDPGE). Residues 311–326 (TEAQAPETTTSTTSSL) are compositionally biased toward low complexity. Ser-342 carries the GPI-anchor amidated serine lipid modification. A propeptide spans 343 to 372 (GGGPSIPFLTSVPVTLVLAAAAATANNLLI) (removed in mature form).

It belongs to the type I cytokine receptor family. Type 3 subfamily. Forms a heterotrimer with LIFR and IL6ST. Interacts with heterodimeric neurotropic cytokine composed of CLCF1/CLC and CRLF1/CLF-1. Either alone or in complex with the heterodimer CLCF1-CRLF1 interacts with SORL1; this interaction may promote internalization and lysosomal degradation. Nervous system.

Its subcellular location is the cell membrane. Its function is as follows. Binds to CNTF. The alpha subunit provides the receptor specificity. The protein is Ciliary neurotrophic factor receptor subunit alpha (Cntfr) of Rattus norvegicus (Rat).